The primary structure comprises 300 residues: Dipeptide transport system permease protein DppC (300 aa).

At 1 to 31 (MSQVTENKVISAPVPMTPLQEFWHYFKRNKG) the chain is on the cytoplasmic side. The helical transmembrane segment at 32–52 (AVVGLVYVVIVLFIAIFANWI) threads the bilayer. At 53–101 (APYNPAEQFRDALLAPPAWQEGGSMAHLLGTDDVGRDVLSRLMYGARLS) the chain is on the periplasmic side. Residues 98–287 (ARLSLLVGCL…LTVLAFNLMG (190 aa)) enclose the ABC transmembrane type-1 domain. The helical transmembrane segment at 102–122 (LLVGCLVVVLSLIMGVILGLI) threads the bilayer. Residues 123-136 (AGYFGGLVDNIIMR) lie on the Cytoplasmic side of the membrane. Residues 137-157 (VVDIMLALPSLLLALVLVAIF) form a helical membrane-spanning segment. The Periplasmic segment spans residues 158–206 (GPSIGNAALALTFVALPHYVRLTRAAVLVEVNRDYVTASRVAGAGAMRQ). A helical transmembrane segment spans residues 207–227 (MFINIFPNCLAPLIVQASLGF). The Cytoplasmic portion of the chain corresponds to 228–230 (SNA). The helical transmembrane segment at 231-251 (ILDMAALGFLGMGAQPPTPEW) threads the bilayer. Over 252-265 (GTMLSDVLQFAQSA) the chain is Periplasmic. Residues 266–286 (WWVVTFPGLAILLTVLAFNLM) traverse the membrane as a helical segment. The Cytoplasmic segment spans residues 287–300 (GDGLRDALDPKLKQ).

It belongs to the binding-protein-dependent transport system permease family. OppBC subfamily. In terms of assembly, the complex is composed of two ATP-binding proteins (DppD and DppF), two transmembrane proteins (DppB and DppC) and a solute-binding protein (DppA).

Its subcellular location is the cell inner membrane. In terms of biological role, part of the ABC transporter DppABCDF involved in dipeptide transport. Responsible for the translocation of the substrate across the membrane. The polypeptide is Dipeptide transport system permease protein DppC (dppC) (Escherichia coli O157:H7).